The sequence spans 441 residues: Ribulose bisphosphate carboxylase large chain (441 aa).

Substrate-binding residues include asparagine 89 and threonine 139. Lysine 141 (proton acceptor) is an active-site residue. Lysine 143 is a binding site for substrate. Mg(2+) is bound by residues lysine 167, aspartate 169, and glutamate 170. Lysine 167 carries the N6-carboxylysine modification. Histidine 260 acts as the Proton acceptor in catalysis. Arginine 261, histidine 293, and serine 345 together coordinate substrate.

The protein belongs to the RuBisCO large chain family. Type I subfamily. Heterohexadecamer of 8 large chains and 8 small chains; disulfide-linked. The disulfide link is formed within the large subunit homodimers. The cofactor is Mg(2+). The disulfide bond which can form in the large chain dimeric partners within the hexadecamer appears to be associated with oxidative stress and protein turnover.

It localises to the plastid. Its subcellular location is the chloroplast. The catalysed reaction is 2 (2R)-3-phosphoglycerate + 2 H(+) = D-ribulose 1,5-bisphosphate + CO2 + H2O. It catalyses the reaction D-ribulose 1,5-bisphosphate + O2 = 2-phosphoglycolate + (2R)-3-phosphoglycerate + 2 H(+). Its function is as follows. RuBisCO catalyzes two reactions: the carboxylation of D-ribulose 1,5-bisphosphate, the primary event in carbon dioxide fixation, as well as the oxidative fragmentation of the pentose substrate in the photorespiration process. Both reactions occur simultaneously and in competition at the same active site. The chain is Ribulose bisphosphate carboxylase large chain from Symphoricarpos albus (Common snowberry).